Consider the following 347-residue polypeptide: Involucrin (347 aa).

Disordered stretches follow at residues 1–43 and 56–347; these read MSQQ…LPAP and PLED…RRSL. Residues 27 to 36 show a composition bias toward polar residues; it reads ADTQQEQVKQ. Low complexity-rich tracts occupy residues 70-114 and 138-161; these read VPEQ…QQES and DQQQ…QQES. Composition is skewed to basic and acidic residues over residues 164 to 173 and 212 to 221; these read QELHVDHHQQ. 2 stretches are compositionally biased toward low complexity: residues 222 to 241 and 265 to 285; these read QQES…QQES and DQQQ…QQQE. Residues 287–341 show a composition bias toward basic and acidic residues; that stretch reads QEDHQKAEHLEQEEAQREQQLKGQLEQEKKGVYQHLDQELTKRDEHLEKKGEHCW.

The protein belongs to the involucrin family. In terms of assembly, directly or indirectly cross-linked to cornifelin (CNFN). Substrate of transglutaminase. Specific glutamines or lysines are cross-linked to keratins, desmoplakin and to inter involucrin molecules. In terms of tissue distribution, keratinocytes of epidermis and other stratified squamous epithelia.

The protein localises to the cytoplasm. Its function is as follows. Part of the insoluble cornified cell envelope (CE) of stratified squamous epithelia. In Sus scrofa (Pig), this protein is Involucrin (IVL).